Reading from the N-terminus, the 256-residue chain is MQRAKEVMKVSDGSLLGEPGRTPLSKKEGVKWQRPRLTRQALMRCCLVKWILSSAAPQGSYSSDSELELSAVRHQPEGLDQLQAQTKFTKKELQSLYRGFKNECPTGLVDEDTFKLIYSQFFPQGDATTYAHFLFNAFDADGNGAIRFEDFVVGLSILLRGTVHEKLKWAFNLYDINKDGYITKEEMLAIMKSIYDMMGRHTYPILREDAPLEHVERFFQKMDRNQDGVVTIDEFLETCQKDENIMSSMQLFENVI.

Positions 1–30 (MQRAKEVMKVSDGSLLGEPGRTPLSKKEGV) are disordered. Residue S14 is modified to Phosphoserine. K26 is covalently cross-linked (Glycyl lysine isopeptide (Lys-Gly) (interchain with G-Cter in SUMO1)). 2 S-palmitoyl cysteine lipidation sites follow: C45 and C46. 2 positions are modified to phosphoserine: S60 and S63. The EF-hand 1; degenerate domain maps to 67–123 (LELSAVRHQPEGLDQLQAQTKFTKKELQSLYRGFKNECPTGLVDEDTFKLIYSQFFP). A Glycyl lysine isopeptide (Lys-Gly) (interchain with G-Cter in SUMO1) cross-link involves residue K90. 3 EF-hand domains span residues 126–161 (DATT…LLRG), 162–197 (TVHE…IYDM), and 210–245 (APLE…DENI). 9 residues coordinate Ca(2+): D175, N177, D179, Y181, E186, D223, N225, D227, and E234. The tract at residues 243–256 (ENIMSSMQLFENVI) is interaction with KCND2.

This sequence belongs to the recoverin family. In terms of assembly, binds to DNA as a homomultimer. Dimerization is induced by binding to calcium. Interacts with the C-terminus of PSEN1 and PSEN2 and with PSEN2 CTF subunit. Associates with KCN1. Component of heteromultimeric potassium channels. Identified in potassium channel complexes containing KCND1, KCND2, KCND3, KCNIP1, KCNIP2, KCNIP3, KCNIP4, DPP6 and DPP10. Interacts with KCND2 and KCND3. In terms of processing, palmitoylated. Palmitoylation enhances association with the plasma membrane. Post-translationally, proteolytically cleaved by caspase-3.

The protein resides in the cytoplasm. It is found in the cell membrane. The protein localises to the endoplasmic reticulum. It localises to the golgi apparatus. Its subcellular location is the nucleus. Regulatory subunit of Kv4/D (Shal)-type voltage-gated rapidly inactivating A-type potassium channels, such as KCND2/Kv4.2 and KCND3/Kv4.3. Modulates channel expression at the cell membrane, gating characteristics, inactivation kinetics and rate of recovery from inactivation in a calcium-dependent and isoform-specific manner. Functionally, may play a role in the regulation of PSEN2 proteolytic processing and apoptosis. Together with PSEN2 involved in modulation of amyloid-beta formation. Its function is as follows. Calcium-dependent transcriptional repressor that binds to the DRE element of genes including PDYN and FOS. Affinity for DNA is reduced upon binding to calcium and enhanced by binding to magnesium. Seems to be involved in nociception. The polypeptide is Calsenilin (KCNIP3) (Bos taurus (Bovine)).